We begin with the raw amino-acid sequence, 365 residues long: MTENHYLLLTPGPLTTTKTVKEVMLYDWCTWDVEYNMMVQKVRAKLVSLATKEEEKYTTVLMQGSGTFSVEAVIGSVIPKNGKLLVCTNGAYGKRIVQMAEMLHIDVVVSQTEEWEPTNIVEVEKILQQDKEITHIAVVHCETTTGIINPIVDVCKLGKQYGKVTLVDAMSSFGGIEIDIAELQIDFLISSANKCIQGVPGFGFVIAQRDELLKCKGQARSLSLDLYDQWETMENQNGKWRFTSPTHVVHAFYQALLELEKEGGVRARYNRYYNNQKLLVNRMGEIGFKPLVNEKYQSPIITSFIYPEGNFEFQQLYNELKRYGFVIYPGKISKVDTFRIGNIGDVHEEDINRLVDSIAKGVVIG.

At Lys-194 the chain carries N6-(pyridoxal phosphate)lysine.

It belongs to the class-V pyridoxal-phosphate-dependent aminotransferase family. PhnW subfamily. Homodimer. The cofactor is pyridoxal 5'-phosphate.

It carries out the reaction (2-aminoethyl)phosphonate + pyruvate = phosphonoacetaldehyde + L-alanine. In terms of biological role, involved in phosphonate degradation. In Bacillus cereus (strain 03BB102), this protein is 2-aminoethylphosphonate--pyruvate transaminase.